A 571-amino-acid polypeptide reads, in one-letter code: PR domain zinc finger protein 14 (571 aa).

S79 is modified (phosphoserine). The interval 129 to 191 (LGHQIIGGDN…PKPSNQEGKS (63 aa)) is disordered. Over residues 165 to 176 (RTSQLLPCSPSK) the composition is skewed to polar residues. The interval 194–384 (RFQFTEEDLH…DIPVSLQVTE (191 aa)) is interaction with CBFA2T2. The 117-residue stretch at 251–367 (EGLCLMQTVF…QNQELLVWYG (117 aa)) folds into the SET domain. A C2H2-type 1; atypical zinc finger spans residues 400-424 (YRCERCGKVFTYKYYRDKHLKYTPC). 5 C2H2-type zinc fingers span residues 432–455 (FPCS…LHVH), 461–483 (HKCS…MRVH), 489–511 (YQCV…IRQH), 517–540 (FKCK…RRSH), and 546–568 (CSCS…MKFH).

Belongs to the class V-like SAM-binding methyltransferase superfamily. In terms of assembly, interacts with CBFA2T2. Expressed in embryonic stem cells. Tends to be overexpressed in breast cancer (at protein level).

It localises to the nucleus. In terms of biological role, transcription factor that has both positive and negative roles on transcription. Required for the maintenance of embryonic stem cell identity and the reacquisition of pluripotency in somatic cells. May play an essential role in germ cell development at 2 levels: the reacquisition of potential pluripotency, including SOX2 up-regulation, and successful epigenetic reprogramming, characterized by EHMT1 repression. Its association with CBFA2T2 is required for the functions in pluripotency and germ cell formation. Directly up-regulates the expression of pluripotency gene POU5F1 through its proximal enhancer. Binds to the DNA consensus sequence 5'-GGTC[TC]CTAA-3'. The protein is PR domain zinc finger protein 14 (PRDM14) of Homo sapiens (Human).